The primary structure comprises 790 residues: Phenylalanine--tRNA ligase beta subunit (790 aa).

The 109-residue stretch at 39-147 (AKPFSGIVVG…ADAPVGVDVR (109 aa)) folds into the tRNA-binding domain. The B5 domain occupies 400-476 (PAKALVNLRH…RLYGYNKLPV (77 aa)). Mg(2+) is bound by residues Asp-454, Asp-460, Glu-463, and Glu-464. An FDX-ACB domain is found at 696-789 (SRFPEIRRDL…LGNRFGASLR (94 aa)).

The protein belongs to the phenylalanyl-tRNA synthetase beta subunit family. Type 1 subfamily. Tetramer of two alpha and two beta subunits. Mg(2+) is required as a cofactor.

Its subcellular location is the cytoplasm. It catalyses the reaction tRNA(Phe) + L-phenylalanine + ATP = L-phenylalanyl-tRNA(Phe) + AMP + diphosphate + H(+). The chain is Phenylalanine--tRNA ligase beta subunit from Hahella chejuensis (strain KCTC 2396).